Consider the following 166-residue polypeptide: RING-H2 finger protein ATL79 (166 aa).

A signal peptide spans methionine 1–alanine 16. Residues serine 41–isoleucine 61 form a helical membrane-spanning segment. Positions threonine 71–proline 90 are disordered. Over residues alanine 81–proline 90 the composition is skewed to low complexity. The RING-type; atypical zinc-finger motif lies at cysteine 107–arginine 149.

Belongs to the RING-type zinc finger family. ATL subfamily.

It is found in the membrane. It catalyses the reaction S-ubiquitinyl-[E2 ubiquitin-conjugating enzyme]-L-cysteine + [acceptor protein]-L-lysine = [E2 ubiquitin-conjugating enzyme]-L-cysteine + N(6)-ubiquitinyl-[acceptor protein]-L-lysine.. The protein operates within protein modification; protein ubiquitination. The polypeptide is RING-H2 finger protein ATL79 (ATL79) (Arabidopsis thaliana (Mouse-ear cress)).